Here is a 204-residue protein sequence, read N- to C-terminus: ATP-dependent Clp protease proteolytic subunit (204 aa).

The active-site Nucleophile is the Ser101. The active site involves His126.

It belongs to the peptidase S14 family. As to quaternary structure, fourteen ClpP subunits assemble into 2 heptameric rings which stack back to back to give a disk-like structure with a central cavity, resembling the structure of eukaryotic proteasomes.

It is found in the cytoplasm. The enzyme catalyses Hydrolysis of proteins to small peptides in the presence of ATP and magnesium. alpha-casein is the usual test substrate. In the absence of ATP, only oligopeptides shorter than five residues are hydrolyzed (such as succinyl-Leu-Tyr-|-NHMec, and Leu-Tyr-Leu-|-Tyr-Trp, in which cleavage of the -Tyr-|-Leu- and -Tyr-|-Trp bonds also occurs).. In terms of biological role, cleaves peptides in various proteins in a process that requires ATP hydrolysis. Has a chymotrypsin-like activity. Plays a major role in the degradation of misfolded proteins. The chain is ATP-dependent Clp protease proteolytic subunit from Deinococcus radiodurans (strain ATCC 13939 / DSM 20539 / JCM 16871 / CCUG 27074 / LMG 4051 / NBRC 15346 / NCIMB 9279 / VKM B-1422 / R1).